Here is a 175-residue protein sequence, read N- to C-terminus: Ribosome maturation factor RimP (175 aa).

The interval 152–175 (EFNRPTDGPGDDGDDGGDDEAGEA) is disordered. The span at 160–175 (PGDDGDDGGDDEAGEA) shows a compositional bias: acidic residues.

It belongs to the RimP family.

It is found in the cytoplasm. In terms of biological role, required for maturation of 30S ribosomal subunits. The chain is Ribosome maturation factor RimP from Nocardioides sp. (strain ATCC BAA-499 / JS614).